A 152-amino-acid chain; its full sequence is Protein-export protein SecB (152 aa).

The protein belongs to the SecB family. In terms of assembly, homotetramer, a dimer of dimers. One homotetramer interacts with 1 SecA dimer.

Its subcellular location is the cytoplasm. One of the proteins required for the normal export of preproteins out of the cell cytoplasm. It is a molecular chaperone that binds to a subset of precursor proteins, maintaining them in a translocation-competent state. It also specifically binds to its receptor SecA. This Rickettsia africae (strain ESF-5) protein is Protein-export protein SecB.